The sequence spans 345 residues: S-adenosylmethionine:tRNA ribosyltransferase-isomerase (345 aa).

The protein belongs to the QueA family. In terms of assembly, monomer.

The protein localises to the cytoplasm. It catalyses the reaction 7-aminomethyl-7-carbaguanosine(34) in tRNA + S-adenosyl-L-methionine = epoxyqueuosine(34) in tRNA + adenine + L-methionine + 2 H(+). It functions in the pathway tRNA modification; tRNA-queuosine biosynthesis. Functionally, transfers and isomerizes the ribose moiety from AdoMet to the 7-aminomethyl group of 7-deazaguanine (preQ1-tRNA) to give epoxyqueuosine (oQ-tRNA). The polypeptide is S-adenosylmethionine:tRNA ribosyltransferase-isomerase (Helicobacter acinonychis (strain Sheeba)).